A 229-amino-acid polypeptide reads, in one-letter code: 2,3-bisphosphoglycerate-dependent phosphoglycerate mutase 2 (229 aa).

Substrate-binding positions include 12–19 (RHGESVAN), 25–26 (TG), R65, 92–95 (ERHY), K103, and 119–120 (RR). H13 functions as the Tele-phosphohistidine intermediate in the catalytic mechanism. E92 functions as the Proton donor/acceptor in the catalytic mechanism.

The protein belongs to the phosphoglycerate mutase family. BPG-dependent PGAM subfamily.

The catalysed reaction is (2R)-2-phosphoglycerate = (2R)-3-phosphoglycerate. Its pathway is carbohydrate degradation; glycolysis; pyruvate from D-glyceraldehyde 3-phosphate: step 3/5. Functionally, catalyzes the interconversion of 2-phosphoglycerate and 3-phosphoglycerate. This is 2,3-bisphosphoglycerate-dependent phosphoglycerate mutase 2 from Lactobacillus johnsonii (strain CNCM I-12250 / La1 / NCC 533).